The sequence spans 150 residues: SsrA-binding protein (150 aa).

A disordered region spans residues 129–150; that stretch reads ETEKQRDWQREKSRIMKGGSKE.

Belongs to the SmpB family.

The protein resides in the cytoplasm. In terms of biological role, required for rescue of stalled ribosomes mediated by trans-translation. Binds to transfer-messenger RNA (tmRNA), required for stable association of tmRNA with ribosomes. tmRNA and SmpB together mimic tRNA shape, replacing the anticodon stem-loop with SmpB. tmRNA is encoded by the ssrA gene; the 2 termini fold to resemble tRNA(Ala) and it encodes a 'tag peptide', a short internal open reading frame. During trans-translation Ala-aminoacylated tmRNA acts like a tRNA, entering the A-site of stalled ribosomes, displacing the stalled mRNA. The ribosome then switches to translate the ORF on the tmRNA; the nascent peptide is terminated with the 'tag peptide' encoded by the tmRNA and targeted for degradation. The ribosome is freed to recommence translation, which seems to be the essential function of trans-translation. The protein is SsrA-binding protein of Cupriavidus pinatubonensis (strain JMP 134 / LMG 1197) (Cupriavidus necator (strain JMP 134)).